The sequence spans 73 residues: MRHAPSYLSRLFTIVDFYWDFSMIRPICTIWTYSISCTYGIYLLILIYRIFSIFGLDYYHDSLLYSLIFLFYC.

This is an uncharacterized protein from Thermoproteus tenax virus 1 (strain KRA1) (TTV1).